Reading from the N-terminus, the 860-residue chain is Rod cGMP-specific 3',5'-cyclic phosphodiesterase subunit alpha (860 aa).

N-acetylglycine is present on glycine 2. GAF domains follow at residues 73 to 222 (QTEK…NLIM) and 254 to 431 (DIER…GWSV). The 334-residue stretch at 483 to 816 (EEEELAEILQ…KEWKALADEY (334 aa)) folds into the PDEase domain. Catalysis depends on histidine 559, which acts as the Proton donor. Residues histidine 563, histidine 599, aspartate 600, and aspartate 720 each coordinate a divalent metal cation. Positions 821–860 (KVQEEKKQKQQSAKSAAAGNQPGGNPSPGGATTSKSCCIQ) are disordered. Residues 830-851 (QQSAKSAAAGNQPGGNPSPGGA) show a composition bias toward low complexity. A Cysteine methyl ester modification is found at cysteine 857. Cysteine 857 carries S-farnesyl cysteine lipidation. The propeptide at 858–860 (CIQ) is removed in mature form.

This sequence belongs to the cyclic nucleotide phosphodiesterase family. As to quaternary structure, oligomer composed of two catalytic chains (alpha and beta), an inhibitory chain (gamma) and the delta chain. It depends on a divalent metal cation as a cofactor.

The protein resides in the cell membrane. The protein localises to the cell projection. Its subcellular location is the cilium. It localises to the photoreceptor outer segment. The enzyme catalyses 3',5'-cyclic GMP + H2O = GMP + H(+). Its function is as follows. Rod-specific cGMP phosphodiesterase that catalyzes the hydrolysis of 3',5'-cyclic GMP. This protein participates in processes of transmission and amplification of the visual signal. This Homo sapiens (Human) protein is Rod cGMP-specific 3',5'-cyclic phosphodiesterase subunit alpha.